We begin with the raw amino-acid sequence, 575 residues long: MGKVVLLPEELRNKIAAGEVVERPVSVVKELVENSIDAGATRIIVEFANGGETLISVIDDGEGMTREDAILALNRFATSKIKTEEDLYNIKTLGFRGEALASIASVSKMELRSKTELEDGVFIKVEGGVIKEVNLWQGSKGTVIKVSDLFYNVPARKKFLKSKATETNLIIDFVKRIAIAYPQISFQLIQDGKSKFITPGDGDLENLISLLFDIRVQESLISFQKREGDYCIEGFVSKPGKLIALKSQDYFYVNRRWVRNNTILQAIREGYKGRILDGYFPFSIIFLTVPYSEVDVNVHPTKREVKFQKEKEVYEFVFRSIREALDEEEKKFFINMKAPETESKEYKSDSQITLDREILSLPLEFKPYKSEKKLSEAVSEYIPLRSGFRIVGQIFDNYIILETKDKVYIIDQHAAHERIKYEELKEELNLGYIQNVEILFPVVIEVSEEEKILLDKYKDLLERFAFSWEDFGPYHIRIVKVPYEFLNFDSKSIENLFREIISDISEKDLSKLEDKIIKSMACHSAVRSGNILIREEMEMLIKLIFEKNIPLTCPHGRPYIWEISREDLERYFHRR.

Belongs to the DNA mismatch repair MutL/HexB family.

Its function is as follows. This protein is involved in the repair of mismatches in DNA. It is required for dam-dependent methyl-directed DNA mismatch repair. May act as a 'molecular matchmaker', a protein that promotes the formation of a stable complex between two or more DNA-binding proteins in an ATP-dependent manner without itself being part of a final effector complex. The chain is DNA mismatch repair protein MutL from Dictyoglomus thermophilum (strain ATCC 35947 / DSM 3960 / H-6-12).